A 394-amino-acid chain; its full sequence is Cytochrome b561 and DOMON domain-containing protein At4g12980 (394 aa).

An N-terminal signal peptide occupies residues 1 to 24 (MDSSYLRISLSFLFWALLLSPAVS). A DOMON domain is found at 49 to 169 (LKAILHYSYD…GKVNQVWQVG (121 aa)). A Cytochrome b561 domain is found at 184 to 381 (GPNLNSVGSL…LEVVTWVIVL (198 aa)). Transmembrane regions (helical) follow at residues 220 to 240 (IHGI…AMIA) and 252 to 272 (AWFY…VAGW). Heme b is bound by residues histidine 221, histidine 257, and histidine 290. A helical transmembrane segment spans residues 292–312 (NIGICLFSIATLQMFAMLLRP). Residue histidine 326 participates in heme b binding. 2 helical membrane passes run 328 to 348 (GVGY…LSIL) and 361 to 381 (VIGT…VIVL).

The cofactor is heme b.

It localises to the membrane. May act as a catecholamine-responsive trans-membrane electron transporter. The polypeptide is Cytochrome b561 and DOMON domain-containing protein At4g12980 (Arabidopsis thaliana (Mouse-ear cress)).